The chain runs to 432 residues: Adenosylmethionine-8-amino-7-oxononanoate aminotransferase (432 aa).

A substrate-binding site is contributed by Trp52. Residue 112-113 (GS) coordinates pyridoxal 5'-phosphate. Tyr144 serves as a coordination point for substrate. Position 245 (Asp245) interacts with pyridoxal 5'-phosphate. Residues Lys274 and Gly307 each contribute to the substrate site. Lys274 carries the post-translational modification N6-(pyridoxal phosphate)lysine. A pyridoxal 5'-phosphate-binding site is contributed by 308 to 309 (PT). Substrate is bound at residue Arg391.

This sequence belongs to the class-III pyridoxal-phosphate-dependent aminotransferase family. BioA subfamily. As to quaternary structure, homodimer. It depends on pyridoxal 5'-phosphate as a cofactor.

The protein localises to the cytoplasm. It catalyses the reaction (8S)-8-amino-7-oxononanoate + S-adenosyl-L-methionine = S-adenosyl-4-methylsulfanyl-2-oxobutanoate + (7R,8S)-7,8-diammoniononanoate. It participates in cofactor biosynthesis; biotin biosynthesis; 7,8-diaminononanoate from 8-amino-7-oxononanoate (SAM route): step 1/1. Functionally, catalyzes the transfer of the alpha-amino group from S-adenosyl-L-methionine (SAM) to 7-keto-8-aminopelargonic acid (KAPA) to form 7,8-diaminopelargonic acid (DAPA). It is the only aminotransferase known to utilize SAM as an amino donor. The polypeptide is Adenosylmethionine-8-amino-7-oxononanoate aminotransferase (Buchnera aphidicola subsp. Schizaphis graminum (strain Sg)).